Reading from the N-terminus, the 290-residue chain is NH(3)-dependent NAD(+) synthetase (290 aa).

An ATP-binding site is contributed by 33-40 (GVSGGVDS). Residue aspartate 39 coordinates Mg(2+). Deamido-NAD(+) is bound at residue arginine 154. An ATP-binding site is contributed by threonine 174. Residue glutamate 179 participates in Mg(2+) binding. Positions 187 and 194 each coordinate deamido-NAD(+). 2 residues coordinate ATP: lysine 203 and serine 225.

The protein belongs to the NAD synthetase family. Homodimer.

The catalysed reaction is deamido-NAD(+) + NH4(+) + ATP = AMP + diphosphate + NAD(+) + H(+). It functions in the pathway cofactor biosynthesis; NAD(+) biosynthesis; NAD(+) from deamido-NAD(+) (ammonia route): step 1/1. Catalyzes the ATP-dependent amidation of deamido-NAD to form NAD. Uses ammonia as a nitrogen source. This Thermotoga neapolitana (strain ATCC 49049 / DSM 4359 / NBRC 107923 / NS-E) protein is NH(3)-dependent NAD(+) synthetase.